Reading from the N-terminus, the 72-residue chain is Brevinin-2SN3 (72 aa).

A signal peptide spans 1–22 (MFTLKKPLLLLVFLGMISLSLC). A propeptide spans 23 to 40 (QDERGADEDDGGEMTEEE) (removed in mature form). Cysteine 66 and cysteine 72 are joined by a disulfide.

This sequence belongs to the frog skin active peptide (FSAP) family. Brevinin subfamily. In terms of tissue distribution, expressed by the skin glands.

It localises to the secreted. Functionally, antimicrobial peptide. Active against a variety of Gram-negative and Gram-positive bacterial strains. Active against fungus C.glabrata 090902 but not against C.albicans ATCC 10231. Shows hemolytic activity against human erythrocytes. The protein is Brevinin-2SN3 of Sylvirana spinulosa (Fine-spined frog).